The following is an 806-amino-acid chain: Glycerol-3-phosphate acyltransferase (806 aa).

An HXXXXD motif motif is present at residues 305-310 (CHRSHM).

Belongs to the GPAT/DAPAT family.

It localises to the cell inner membrane. It catalyses the reaction sn-glycerol 3-phosphate + an acyl-CoA = a 1-acyl-sn-glycero-3-phosphate + CoA. It participates in phospholipid metabolism; CDP-diacylglycerol biosynthesis; CDP-diacylglycerol from sn-glycerol 3-phosphate: step 1/3. In Salmonella arizonae (strain ATCC BAA-731 / CDC346-86 / RSK2980), this protein is Glycerol-3-phosphate acyltransferase.